Here is an 843-residue protein sequence, read N- to C-terminus: Protein P (843 aa).

The terminal protein domain (TP) stretch occupies residues 1-177 (MPLSYQHFRK…FCGSPYSWEQ (177 aa)). Positions 178-346 (ELQHGRLVFQ…YCLSHIVNLL (169 aa)) are spacer. Disordered stretches follow at residues 218 to 243 (LKQS…SGSI) and 290 to 316 (STSK…RSQS). A compositionally biased stretch (polar residues) spans 290 to 299 (STSKRQSSSG). The segment at 347 to 690 (EDWGPCTEHG…YLHLYPVARQ (344 aa)) is polymerase/reverse transcriptase domain (RT). In terms of domain architecture, Reverse transcriptase spans 357 to 600 (EHNIRIPRTP…YSLNFMGYVI (244 aa)). 3 residues coordinate Mg(2+): Asp-429, Asp-551, and Asp-552.

The protein belongs to the hepadnaviridae P protein family.

It carries out the reaction DNA(n) + a 2'-deoxyribonucleoside 5'-triphosphate = DNA(n+1) + diphosphate. The enzyme catalyses Endonucleolytic cleavage to 5'-phosphomonoester.. With respect to regulation, activated by host HSP70 and HSP40 in vitro to be able to bind the epsilon loop of the pgRNA. Because deletion of the RNase H region renders the protein partly chaperone-independent, the chaperones may be needed indirectly to relieve occlusion of the RNA-binding site by this domain. Inhibited by several reverse-transcriptase inhibitors: Lamivudine, Adefovir and Entecavir. Functionally, multifunctional enzyme that converts the viral RNA genome into dsDNA in viral cytoplasmic capsids. This enzyme displays a DNA polymerase activity that can copy either DNA or RNA templates, and a ribonuclease H (RNase H) activity that cleaves the RNA strand of RNA-DNA heteroduplexes in a partially processive 3'- to 5'-endonucleasic mode. Neo-synthesized pregenomic RNA (pgRNA) are encapsidated together with the P protein, and reverse-transcribed inside the nucleocapsid. Initiation of reverse-transcription occurs first by binding the epsilon loop on the pgRNA genome, and is initiated by protein priming, thereby the 5'-end of (-)DNA is covalently linked to P protein. Partial (+)DNA is synthesized from the (-)DNA template and generates the relaxed circular DNA (RC-DNA) genome. After budding and infection, the RC-DNA migrates in the nucleus, and is converted into a plasmid-like covalently closed circular DNA (cccDNA). The activity of P protein does not seem to be necessary for cccDNA generation, and is presumably released from (+)DNA by host nuclear DNA repair machinery. In Homo sapiens (Human), this protein is Protein P.